The primary structure comprises 160 residues: Cytochrome b6-f complex subunit 4 (160 aa).

3 helical membrane-spanning segments follow: residues 36-56 (LLYI…GLAV), 95-115 (LLGV…PFLE), and 131-151 (TVFL…AMPI).

The protein belongs to the cytochrome b family. PetD subfamily. The 4 large subunits of the cytochrome b6-f complex are cytochrome b6, subunit IV (17 kDa polypeptide, petD), cytochrome f and the Rieske protein, while the 4 small subunits are petG, petL, petM and petN. The complex functions as a dimer.

It is found in the plastid. Its subcellular location is the chloroplast thylakoid membrane. Functionally, component of the cytochrome b6-f complex, which mediates electron transfer between photosystem II (PSII) and photosystem I (PSI), cyclic electron flow around PSI, and state transitions. In Zygnema circumcarinatum (Green alga), this protein is Cytochrome b6-f complex subunit 4.